The sequence spans 342 residues: MDILKSEILRKRQLVEDRNLLVENKKYFKRSELAKKEEEAYFERCGYKVQPKEDDQKPLTSSNPVLELELAEEKLPMTLSRQEVIRRLRERGEPMRLFGETDYDAFQRLRKIEILTPEVNKGLRNDLKAALDKIDQQYLNEIVGGQEPGEEDTQNDLKVHEENTTIEELEALGESLGKGDDHKDMDIITKFLKFLLGVWAKELNSREDYVKRSVQGKLNSATQKQTESYLRPLFRKLRKRNLPADIKESITDIIKFMLQREYVKANDAYLQMAIGNAPWPIGVTMVGIHARTGREKIFSKHVAHVLNDETQRKYIQGLKRLMTICQKHFPTDPSKCVEYNAL.

An N-acetylmethionine modification is found at Met1.

It belongs to the PRP18 family. As to quaternary structure, heterodimer with PPIH. Interacts with PRPF4 and with the spliceosome. Part of a complex containing U4/U6 snRNPs. Also detected in the cytoplasm. Detected in brain, heart, liver and skeletal muscle.

Its subcellular location is the nucleus speckle. Functionally, participates in the second step of pre-mRNA splicing. Down-regulates the expression of potassium channel subunits. This is Pre-mRNA-splicing factor 18 (Prpf18) from Rattus norvegicus (Rat).